We begin with the raw amino-acid sequence, 724 residues long: Hyperosmolality-gated Ca2+ permeable channel 3.1 (724 aa).

Topologically, residues 1-4 are extracellular; it reads MEFG. The chain crosses the membrane as a helical span at residues 5 to 25; that stretch reads SFLVSLGTSFVIFVILMLLFT. At 26-85 the chain is on the cytoplasmic side; the sequence is WLSRKSGNAPIYYPNRILKGLEPWEGTSLTRNPFAWMREALTSSEQDVVNLSGVDTAVHF. The chain crosses the membrane as a helical span at residues 86–108; it reads VFLSTVLGIFACSSLLLLPTLLP. The Extracellular segment spans residues 109 to 147; sequence LAATDNNIKNTKNATDTTSKGTFSQLDNLSMANITKKSS. Residues 148–170 form a helical membrane-spanning segment; that stretch reads RLWAFLGAVYWISLVTYFFLWKA. Over 171 to 358 the chain is Cytoplasmic; that stretch reads YKHVSSLRAQ…WQNLNIKLFS (188 aa). Positions 241–309 form a coiled coil; sequence EKLEGYKKKL…KAVLAEKQQT (69 aa). A helical transmembrane segment spans residues 359-385; that stretch reads RIIRQYFIYFFVAVTILFYMIPIAFVS. At 386–411 the chain is on the extracellular side; sequence AITTLKNLQRIIPFIKPVVEITAIRT. Residues 412 to 439 traverse the membrane as a helical segment; that stretch reads VLESFLPQIALIVFLAMLPKLLLFLSKA. Over 440–448 the chain is Cytoplasmic; the sequence is EGIPSQSHA. A helical transmembrane segment spans residues 449-472; the sequence is IRAASGKYFYFSVFNVFIGVTLAG. Over 473-497 the chain is Extracellular; that stretch reads TLFNTVKDIAKNPKLDMIINLLATS. The helical transmembrane segment at 498 to 529 threads the bilayer; it reads LPKSATFFLTYVALKFFIGYGLELSRIIPLII. The Cytoplasmic segment spans residues 530–554; the sequence is FHLKKKYLCKTEAEVKEAWYPGDLS. Residues 555 to 574 traverse the membrane as a helical segment; that stretch reads YATRVPGDMLILTITFCYSV. A topological domain (extracellular) is located at residue Ile575. The chain crosses the membrane as a helical span at residues 576 to 594; sequence APLILIFGITYFGLGWLVL. The Cytoplasmic portion of the chain corresponds to 595–612; that stretch reads RNQALKVYVPSYESYGRM. Residues 613-636 form a helical membrane-spanning segment; the sequence is WPHIHQRILAALFLFQVVMFGYLG. The Extracellular portion of the chain corresponds to 637-641; that stretch reads AKTFF. A helical transmembrane segment spans residues 642-662; the sequence is YTALVIPLIITSLIFGYVCRQ. At 663–724 the chain is on the cytoplasmic side; sequence KFYGGFEHTA…YQDFNAIAGV (62 aa).

This sequence belongs to the CSC1 (TC 1.A.17) family. Homodimer.

It localises to the membrane. In terms of biological role, acts as a hyperosmolarity-gated non-selective cation channel that permeates Ca(2+) ions. Mechanosensitive ion channel that converts mechanical stimuli into a flow of ions: activated in response to membrane stretch. Not activated in response to membrane poke. The chain is Hyperosmolality-gated Ca2+ permeable channel 3.1 from Arabidopsis thaliana (Mouse-ear cress).